The sequence spans 591 residues: Serine/threonine-protein phosphatase PP2A 65 kDa regulatory subunit (591 aa).

Ala-2 carries the post-translational modification N-acetylalanine. HEAT repeat units follow at residues 10-48, 49-86, 87-125, 126-163, 164-202, 203-241, 242-280, 281-323, 324-362, 363-401, 402-440, 441-479, 480-518, 519-557, and 558-591; these read DSLY…GEER, TRSE…GGPE, FAMY…SAQD, LEIH…VTQP, VKAE…ETEY, LKSD…PQDD, VEHL…GPEI, TRVD…QVQI, ILSS…GAYQ, TVEQ…GIQQ, LSQS…GQEF, FDQK…GAPW, AEQA…GTDI, TTKL…EASV, and IDAQ…IAAA.

Belongs to the phosphatase 2A regulatory subunit A family. As to quaternary structure, PP2A exists in several trimeric forms, all of which consist of a core composed of a catalytic subunit associated with a 65 kDa regulatory subunit (PR65) (subunit A). The core complex associates with a third, variable subunit (subunit B), which confers distinct properties to the holoenzyme. Interacts with the inorganic phosphate transporter PXo (CG10483). Component of the Integrator-PP2A (INTAC) complex, composed of the Integrator core complex and protein phosphatase 2A subunits mts/PP2A and Pp2A-29B. Expression varies in tissues throughout development. Highly distributed expression in early embryos. In late embryonal development, found at high levels in nervous system and gonads. In third instar larvae, found in brain, imaginal disks and salivary glands.

It is found in the nucleus. The PR65 subunit of protein phosphatase 2A serves as a scaffolding molecule to coordinate the assembly of the catalytic subunit and a variable regulatory B subunit. Key mediator of a quality checkpoint during transcription elongation as part of the Integrator-PP2A (INTAC) complex. The INTAC complex drives premature transcription termination of transcripts that are unfavorably configured for transcriptional elongation: within the INTAC complex, acts as a scaffolding subunit for mts/PP2A, which catalyzes dephosphorylation of the C-terminal domain (CTD) of Pol II subunit POLR2A/RPB1 and Spt5, thereby preventing transcriptional elongation. The chain is Serine/threonine-protein phosphatase PP2A 65 kDa regulatory subunit (Pp2A-29B) from Drosophila melanogaster (Fruit fly).